Consider the following 621-residue polypeptide: 1-deoxy-D-xylulose-5-phosphate synthase (621 aa).

Thiamine diphosphate-binding positions include His-80 and 121–123 (GHS). Asp-152 contributes to the Mg(2+) binding site. Thiamine diphosphate-binding positions include 153–154 (GA), Asn-181, Tyr-288, and Glu-370. A Mg(2+)-binding site is contributed by Asn-181.

The protein belongs to the transketolase family. DXPS subfamily. Homodimer. It depends on Mg(2+) as a cofactor. The cofactor is thiamine diphosphate.

The enzyme catalyses D-glyceraldehyde 3-phosphate + pyruvate + H(+) = 1-deoxy-D-xylulose 5-phosphate + CO2. It participates in metabolic intermediate biosynthesis; 1-deoxy-D-xylulose 5-phosphate biosynthesis; 1-deoxy-D-xylulose 5-phosphate from D-glyceraldehyde 3-phosphate and pyruvate: step 1/1. In terms of biological role, catalyzes the acyloin condensation reaction between C atoms 2 and 3 of pyruvate and glyceraldehyde 3-phosphate to yield 1-deoxy-D-xylulose-5-phosphate (DXP). This is 1-deoxy-D-xylulose-5-phosphate synthase from Serratia proteamaculans (strain 568).